The primary structure comprises 727 residues: Sodium-dependent neutral amino acid transporter SLC6A17 (727 aa).

At 1-68 the chain is on the cytoplasmic side; that stretch reads MPKNSKVTQR…DRPAWNSKLQ (68 aa). A phosphoserine mark is found at serine 13 and serine 20. A helical membrane pass occupies residues 69-89; sequence YILAQIGFSVGLGNIWRFPYL. Residues 90–96 are Extracellular-facing; it reads CQKNGGG. Residues 97 to 116 form a helical membrane-spanning segment; it reads AYLVPYLVLLIIIGIPLFFL. Topologically, residues 117-140 are cytoplasmic; the sequence is ELAVGQRIRRGSIGVWHYVCPRLG. A helical transmembrane segment spans residues 141–161; sequence GIGFSSCIVCLFVGLYYNVII. At 162–224 the chain is on the extracellular side; that stretch reads GWSVFYFFKS…NSISESGGLN (63 aa). Asparagine 186 carries N-linked (GlcNAc...) asparagine glycosylation. A helical membrane pass occupies residues 225–243; it reads WKMTVCLLVAWSIVGMAVV. The Cytoplasmic portion of the chain corresponds to 244–251; that stretch reads KGIQSSGK. The chain crosses the membrane as a helical span at residues 252 to 269; the sequence is VMYFSSLFPYVVLACFLV. The Extracellular segment spans residues 270 to 304; the sequence is RGLLLRGAVDGILHMFTPKLDKMLDPQVWREAATQ. The chain crosses the membrane as a helical span at residues 305–322; it reads VFFALGLGFGGVIAFSSY. The Cytoplasmic segment spans residues 323–333; the sequence is NKQDNNCHFDA. A helical membrane pass occupies residues 334–355; sequence ALVSFINFFTSVLATLVVFAVL. The Extracellular portion of the chain corresponds to 356 to 451; sequence GFKANIMNEK…FIAFTEAMTH (96 aa). Residue tyrosine 377 is modified to Phosphotyrosine. N-linked (GlcNAc...) asparagine glycosylation occurs at asparagine 393. The chain crosses the membrane as a helical span at residues 452 to 471; sequence FPASPFWSVMFFLMLINLGL. The Cytoplasmic segment spans residues 472–494; the sequence is GSMIGTMAGITTPIIDTFKVPKE. Residues 495–513 form a helical membrane-spanning segment; that stretch reads MFTVGCCVFAFFVGLLFVQ. The Extracellular segment spans residues 514 to 528; that stretch reads RSGNYFVTMFDDYSA. A helical transmembrane segment spans residues 529–549; sequence TLPLTVIVILENIAVAWIYGT. The Cytoplasmic segment spans residues 550–569; that stretch reads KKFMQELTEMLGFRPYRFYF. The chain crosses the membrane as a helical span at residues 570 to 591; that stretch reads YMWKFVSPLCMAVLTTASIIQL. Residues 592-618 lie on the Extracellular side of the membrane; the sequence is GVSPPGYSAWIKEEAAERYLYFPNWAM. The chain crosses the membrane as a helical span at residues 619–641; that stretch reads ALLITLIAVATLPIPVVFILRHF. The Cytoplasmic segment spans residues 642 to 727; it reads HLLSDGSNTL…LLASTPESEL (86 aa). 2 positions are modified to phosphoserine: serine 665 and serine 701. The interval 680-727 is disordered; sequence VPSEAPSPMPTHRSYLGPGSTSPLESSSHPNGRYGSGYLLASTPESEL. Polar residues predominate over residues 698-709; that stretch reads GSTSPLESSSHP.

The protein belongs to the sodium:neurotransmitter symporter (SNF) (TC 2.A.22) family. Found exclusively in the central nervous system and is more abundant in the cerebellum and the cerebral cortex. Expressed in PC-12 cell line.

It is found in the cytoplasmic vesicle. It localises to the secretory vesicle. The protein localises to the synaptic vesicle membrane. Its subcellular location is the postsynapse. The protein resides in the presynapse. It catalyses the reaction L-proline(in) + Na(+)(in) = L-proline(out) + Na(+)(out). The enzyme catalyses L-leucine(in) + Na(+)(in) = L-leucine(out) + Na(+)(out). The catalysed reaction is glycine(in) + Na(+)(in) = glycine(out) + Na(+)(out). It carries out the reaction L-alanine(in) + Na(+)(in) = L-alanine(out) + Na(+)(out). It catalyses the reaction L-glutamine(in) + Na(+)(in) = L-glutamine(out) + Na(+)(out). Its function is as follows. Synaptic vesicle transporter with apparent selectivity for neutral amino acids. The transport is sodium-coupled but chloride-independent, likely driven by the proton electrochemical gradient generated by vacuolar H(+)-ATPase in an overall electrogenic mechanism. May contribute to the synaptic uptake of neurotransmitter precursors in a process coupled in part to vesicle exocytosis. This Rattus norvegicus (Rat) protein is Sodium-dependent neutral amino acid transporter SLC6A17.